The primary structure comprises 432 residues: Adenosylmethionine-8-amino-7-oxononanoate aminotransferase (432 aa).

Trp52 contacts substrate. 112-113 (GS) contributes to the pyridoxal 5'-phosphate binding site. Tyr144 is a binding site for substrate. Asp245 serves as a coordination point for pyridoxal 5'-phosphate. 2 residues coordinate substrate: Lys274 and Gly307. N6-(pyridoxal phosphate)lysine is present on Lys274. 308–309 (PT) contacts pyridoxal 5'-phosphate. Arg391 contacts substrate.

The protein belongs to the class-III pyridoxal-phosphate-dependent aminotransferase family. BioA subfamily. Homodimer. Pyridoxal 5'-phosphate is required as a cofactor.

Its subcellular location is the cytoplasm. The catalysed reaction is (8S)-8-amino-7-oxononanoate + S-adenosyl-L-methionine = S-adenosyl-4-methylsulfanyl-2-oxobutanoate + (7R,8S)-7,8-diammoniononanoate. The protein operates within cofactor biosynthesis; biotin biosynthesis; 7,8-diaminononanoate from 8-amino-7-oxononanoate (SAM route): step 1/1. Its function is as follows. Catalyzes the transfer of the alpha-amino group from S-adenosyl-L-methionine (SAM) to 7-keto-8-aminopelargonic acid (KAPA) to form 7,8-diaminopelargonic acid (DAPA). It is the only aminotransferase known to utilize SAM as an amino donor. This Buchnera aphidicola subsp. Schizaphis graminum (strain Sg) protein is Adenosylmethionine-8-amino-7-oxononanoate aminotransferase.